The chain runs to 182 residues: ATP-dependent protease subunit HslV (182 aa).

Residue Thr12 is part of the active site. Ala167, Cys170, and Thr173 together coordinate Na(+).

This sequence belongs to the peptidase T1B family. HslV subfamily. In terms of assembly, a double ring-shaped homohexamer of HslV is capped on each side by a ring-shaped HslU homohexamer. The assembly of the HslU/HslV complex is dependent on binding of ATP.

It localises to the cytoplasm. The enzyme catalyses ATP-dependent cleavage of peptide bonds with broad specificity.. Its activity is regulated as follows. Allosterically activated by HslU binding. Protease subunit of a proteasome-like degradation complex believed to be a general protein degrading machinery. In Chlorobium phaeobacteroides (strain DSM 266 / SMG 266 / 2430), this protein is ATP-dependent protease subunit HslV.